The sequence spans 417 residues: Biofilm dispersion protein BdlA (417 aa).

The 66-residue stretch at 1 to 66 folds into the PAS 1 domain; that stretch reads MAALDRSMAR…RRFWERLRRG (66 aa). The PAC 1 domain occupies 67 to 114; sequence EHFSGRCKRITREGRPLWLEATYNPVRDGQGRLLKVVKYASDIDAIVH. Residues 115–188 form the PAS 2 domain; it reads QEHEMQSKLD…ADLWRRLNRG (74 aa). The PAC 2 domain occupies 191–241; sequence VTGQFRRVHRNGQPVWLEASYNPVYDADGKLYKVVKFASDVSDRMRRYQAE. Residues 242–417 enclose the Methyl-accepting transducer domain; the sequence is ADNAHQAHTL…QFSRTLNADL (176 aa).

Essential for biofilm dispersion by sensing environmental cues. May be involved in sensing and transducing signals within cells, resulting in the modulation of c-di-GMP levels, swimming motility and adhesiveness of the bacterial cell surface. This chain is Biofilm dispersion protein BdlA (bdlA), found in Pseudomonas aeruginosa (strain ATCC 15692 / DSM 22644 / CIP 104116 / JCM 14847 / LMG 12228 / 1C / PRS 101 / PAO1).